The following is a 678-amino-acid chain: DNA ligase (678 aa).

NAD(+)-binding positions include 34 to 38 (DSEYD), 83 to 84 (SL), and glutamate 114. The N6-AMP-lysine intermediate role is filled by lysine 116. NAD(+) is bound by residues arginine 137, glutamate 176, lysine 293, and lysine 317. Zn(2+)-binding residues include cysteine 411, cysteine 414, cysteine 429, and cysteine 435. In terms of domain architecture, BRCT spans 594–678 (PTRQPLNGES…LMAGYGQTLS (85 aa)).

It belongs to the NAD-dependent DNA ligase family. LigA subfamily. Mg(2+) is required as a cofactor. It depends on Mn(2+) as a cofactor.

The enzyme catalyses NAD(+) + (deoxyribonucleotide)n-3'-hydroxyl + 5'-phospho-(deoxyribonucleotide)m = (deoxyribonucleotide)n+m + AMP + beta-nicotinamide D-nucleotide.. DNA ligase that catalyzes the formation of phosphodiester linkages between 5'-phosphoryl and 3'-hydroxyl groups in double-stranded DNA using NAD as a coenzyme and as the energy source for the reaction. It is essential for DNA replication and repair of damaged DNA. This Acinetobacter baumannii (strain AB307-0294) protein is DNA ligase.